Reading from the N-terminus, the 145-residue chain is Peptidyl-lysine N-acetyltransferase YjaB (145 aa).

In terms of domain architecture, N-acetyltransferase spans 3–144; sequence INIRRSRHEE…KPYPLLNLIY (142 aa).

It belongs to the acetyltransferase family.

It catalyses the reaction L-lysyl-[protein] + acetyl-CoA = N(6)-acetyl-L-lysyl-[protein] + CoA + H(+). N-epsilon-lysine acetyltransferase that catalyzes acetylation of a large number of proteins. The sequence is that of Peptidyl-lysine N-acetyltransferase YjaB (yjaB) from Salmonella typhimurium (strain LT2 / SGSC1412 / ATCC 700720).